Consider the following 101-residue polypeptide: Phosphoprotein OPG062 (101 aa).

Residues 50-73 form a disordered region; that stretch reads KPSSPTCERRPSSPSRCERMNNPG. Positions 56–68 are enriched in basic and acidic residues; that stretch reads CERRPSSPSRCER.

Belongs to the orthopoxvirus OPG062 family. As to quaternary structure, self-associates to form high molecular-weight forms. Interacts with protein OPG157. Interacts with host RICTOR and RPTOR; these interactions disrupt the mTORC1 and mTORC2 crosstalk.

Its subcellular location is the virion. Functionally, plays an essential role in virion assembly and morphogenesis. Also plays a role in the inhibition of host immune response by dysregulating mTOR. Sequesters host RICTOR and RPTOR, thereby disrupting mTORC1 and mTORC2 crosstalk. In turn, blocks the host antiviral response in part through mTOR-dependent degradation of cGAS, the primary poxvirus sensor. This is Phosphoprotein OPG062 (OPG062) from Monkeypox virus.